We begin with the raw amino-acid sequence, 287 residues long: UTP--glucose-1-phosphate uridylyltransferase 1 (287 aa).

Belongs to the UDPGP type 2 family.

It carries out the reaction alpha-D-glucose 1-phosphate + UTP + H(+) = UDP-alpha-D-glucose + diphosphate. It functions in the pathway glycolipid metabolism; diglucosyl-diacylglycerol biosynthesis. In terms of biological role, catalyzes the formation of UDP-glucose from glucose-1-phosphate and UTP. This is an intermediate step in the biosynthesis of diglucosyl-diacylglycerol (Glc2-DAG), i.e. a glycolipid found in the membrane, which is also used as a membrane anchor for lipoteichoic acid (LTA). This Staphylococcus saprophyticus subsp. saprophyticus (strain ATCC 15305 / DSM 20229 / NCIMB 8711 / NCTC 7292 / S-41) protein is UTP--glucose-1-phosphate uridylyltransferase 1 (gtaB1).